Reading from the N-terminus, the 569-residue chain is Glucose-6-phosphate isomerase, cytosolic 2 (569 aa).

The Proton donor role is filled by E360. Catalysis depends on residues H391 and K516.

This sequence belongs to the GPI family. As to quaternary structure, homodimer.

Its subcellular location is the cytoplasm. The enzyme catalyses alpha-D-glucose 6-phosphate = beta-D-fructose 6-phosphate. It functions in the pathway carbohydrate degradation; glycolysis; D-glyceraldehyde 3-phosphate and glycerone phosphate from D-glucose: step 2/4. This Clarkia concinna (Red ribbons) protein is Glucose-6-phosphate isomerase, cytosolic 2 (PGIC2).